The chain runs to 126 residues: Ribosome-binding factor A (126 aa).

It belongs to the RbfA family. In terms of assembly, monomer. Binds 30S ribosomal subunits, but not 50S ribosomal subunits or 70S ribosomes.

Its subcellular location is the cytoplasm. Its function is as follows. One of several proteins that assist in the late maturation steps of the functional core of the 30S ribosomal subunit. Associates with free 30S ribosomal subunits (but not with 30S subunits that are part of 70S ribosomes or polysomes). Required for efficient processing of 16S rRNA. May interact with the 5'-terminal helix region of 16S rRNA. The polypeptide is Ribosome-binding factor A (Halorhodospira halophila (strain DSM 244 / SL1) (Ectothiorhodospira halophila (strain DSM 244 / SL1))).